A 331-amino-acid chain; its full sequence is Hyaluronidase B (331 aa).

Disulfide bonds link Cys-19–Cys-308 and Cys-185–Cys-197. The N-linked (GlcNAc...) asparagine glycan is linked to Asn-79. Catalysis depends on Glu-109, which acts as the Proton donor.

This sequence belongs to the glycosyl hydrolase 56 family. In terms of tissue distribution, expressed by the venom gland.

It is found in the secreted. It carries out the reaction Random hydrolysis of (1-&gt;4)-linkages between N-acetyl-beta-D-glucosamine and D-glucuronate residues in hyaluronate.. Its function is as follows. Hydrolyzes high molecular weight hyaluronic acid to produce small oligosaccharides. The sequence is that of Hyaluronidase B from Vespa velutina (Asian yellow-legged hornet).